The primary structure comprises 98 residues: Cystatin-B (98 aa).

M1 bears the N-acetylmethionine mark. Positions 46-50 (QVVAG) match the Secondary area of contact motif.

It belongs to the cystatin family. In terms of assembly, able to form dimers stabilized by noncovalent forces.

The protein localises to the cytoplasm. Its subcellular location is the nucleus. Functionally, this is an intracellular thiol proteinase inhibitor. Tightly binding reversible inhibitor of cathepsins L, H and B. The sequence is that of Cystatin-B (CSTB) from Pongo pygmaeus (Bornean orangutan).